Consider the following 8545-residue polypeptide: MSSSPPARPCCVCFRFRPHEDEKAQKNTFTRWINFHLEEHSSSGRIEDLFEDIRDGVLLCHLIEVLTGEALAVHKGRVSKRVHHIANLTTALTVLRRRGLELINNNAADIADGNPRIVLGLIWQIILHFQIETNMILLREWGWAATGTEEPTSSAQPEVVVTAPSPTPSSKKSHSKVSSLSGSKTSLASGEKAPSSPLRQRIASFLTPTKKAPKLTAQPVKQSVEQVFLRWINAEIGDLVGGRRVENMDKQWRDGILFCALVSRWRPDVISMREVTNANPRDNLELAFNLAHQHLGVRRLLAVEDMMIEKPDKRSVITYVSQFVRMFGERSPMQGREQHEIFLAWLEATYLLCTRHELNSQECSRIRREFIEHRPLFNTIIVTKVNYDVEELVEIEKKWDCIRETLEKYARRSERDLPEPFASIATWIAGAEHILSRPLDLDATDAKKTVTMLQKLISEHQKYMEDLPKRQEDFEEAVKHGGLGGRPVAPEFSEPLRARFAQIEEENEPRISTLRILTTHYILLQYLQHIDEKIILWRTADSVTLLLRWIKEYTQLNAENPQAKCASYINKITLTMANDQNSKLDKEAILNTSNEKTAETLKRFESLWIELKLLKVEWVEWETHVSQLEEIIEERRRNGVPPTPEDEQALAVITAGADQLAPKLGASARLSNNQRLDVLTHSFKKLTKTTIKIGGRLVVELEPSTSEQASKISYSWQASDELLKVEMQLRDRIQRDADSSDREQLEYRAETFRNIRDKLIELERLNEIYDNHSRDQVDTPNRNLIRHDMGTIIYGLQAGQYANFVDLSCYAFVYDEYNQVPVNLTENVLSEDYVREIVNRKKAILTRRENNEDEIRESIRDMEECDRIIEGWQSTEIEELRAEWNIKLSEFESWHEMMQQVEVLSQTIQTRLDVTVIQTIWILKERSYDIKHSELGGTLRESLEQLATTSETSVNRHLQNLELSNEQDCPDAIEFLEEVGRESVSKLSAAVDDRYIYTLHVLRTKMELFRRLQNFCDAVKILRSQNTKWNGIKISQIDQVQSEIDTLIVRLDEEWTQDANQLRAELASIHGSFFQLEFDRLNEKLNMLIHDKDKLRELMVHRRHYLTAANELITDSKTDLAQRATSSDHPDDILRATDEVTKALDIKGEELRRLGELAEMNITDLVVVALILSFRRRQLGSEGEPEVEELRRALREIIARPITEPRDVSPDAIVADILRMKDEKKRDEKTIDEIQATTLTDEQRASFAPLIEDYRRRADRHRIVFEHLVMIYLDWLSRQFDELEDEIGMTIQTSRADDLRRMNSTEWNKWKTDLANIERQVGPDTKKALSAELADLHRKRDSMEARINKYLTHSAKINAKLTQFEKWLNAIEEDIEQTERQFEDPERSYRFGSLHEVALAKQRLVAKLERLNVANKEEVLRLCERYHTIMHKLTPFQTAVGLPLHVSTNLDRNGPFQSQISVSSIASSELERPESVMSLTSSIGVIPADVAELSPFEAKINKLLQKLHIIEDSYLKGPKPIDTVREDVKQLEKYRNRGAEILQQLSTSNIEDAEKEGLKHRFVLMLNNYDDILRSIENEIRDDNELTAKNQEILAELSNAEQTLQNSPLEDLDISAELDRLQMQLDLVKVMCNKPRKYVECELIDSSREGSPQERRRRKKKVMVMVSNTITTIIHVVEERLEASDISRNPDVQQKLVAVKENLRELDTTTVTPHPPSIMSPLGTENRNDLEEVKRLAAEIDRAIDTASSMYEDAPTDEDALKSAIHLLDDQKVTLNHLHVVLEGIPEKNEQDRTDAIDIASSVGEKLGNLKSAVEEVYEEVLASTNPVKEDQPLQHIQEVQTTPAEQSNWDTDEFSRQPPVLSDERIELKTDPSAIDKFEVRSDEDPVPKIIDLFGQLQTAVNEASPLACEGTDDVDALQVASDKLTKQDRTIRKIHAILDTIDDPVQKPAIIESLDKIKDQINNARDNINRQIDNLNYNQTPVVVPKESTKTPLNEIEDAVRQASTVVSDELCNTEKLLSARQTLANVKPQVDSVEANVWSNPETIETVTPILEEYTTLVDNIEKKLANEIEVPTNDPSRQDLVQQLQDVILECEEVVVNCDNIEKLEESKLKLEKARPLLDQIGDNVEKLSREQSPDTSDAIDALSNVHQQYNATIMSIDDKIDELKNPEEDTSAADQLISELHVISEMPAVTIDLSMLNAIEEGLSTLPAHQAENVQAKIDELRQKKEVADQTEQILSDLNAFGDMPAITLDLDLLKSVEDGIAVLPVEDSERIKAKIVDLRKKKEDADQAEALLQELSVISDMPISTLDLNMLQGIEDNLNSLPAEESDEIREKLNELRRRKQESDQAEALLQELSVISDMPISTLDLNMLQGVEDNLNSLPTEEADKIREKINDLRRRKQESDLAEALLQELSVIYDMPTSTIDLNMLQGIEDNLNSLPAEESDKIREKINDLRRRKQESDLAEALLQELSVIYDMPTSTIDLNMLQGIEDNLNSLPAEESDKIREKINDLRRRKQESDQAEALLQELSVVSDMPASTIDINMLQSIEDGLSTLLSEDRSKIQQAIDSLRKKKSDSDLAQHALEALSVQSKLPSVSINLEELKKLEETLSTVPVEDSKVIRDKIAELKTEKALADHAENYLVELKKIEDMPISAVGSDVLATIEDQILQMPVQYQPSVKETLDKLKQAKEEDDKLAGVYDELEKIAKLPARDYDNKLLAKIDEKLNSLPKDQIAETHRKVEDIKVTKADIVAQIDVLDKLPAKDIDEHLLNSIEEKLPTIPSDSSDQLQIAIGKLRDRKQANIDEGKKILNELAEIQKMPADSLNEHALNLLATESDKFGSEISDKIMQEIDVLREKQNNHEVARLNAESVLQQLDKISEEPHLSLTEERLAPFLQNIDTVPACFVDKIRNKINEVQKLHDEAVQDEKDELKEKLVAKVQNIGKTSIDDVNVSDFEEIEREINGSLEAFEAEPLLAKIQELREAKRVGDEARSAAHDQIVALEKEAEDVTAKESAKKKKKDKKKSPQEMIDELSAKVVEAKALIPKIEEAAKNENLPADDKPKAEQLVSNLEAFVKDVETQVSEKQDELDKLNNANDAIKRLGDALDDAEKTVVPSSVPALSEFKDRIAPHLATLVEAVNDVPASVEPSAVALRDRAAKFVSDLEKNIQKTGDDEKRADELKNDVGNAVKNVEDVVSKYQNQPQPLDVAKDDANKLKATVEQLTKLAESSDKIDPQVAKDIKDSKTKAKELLQALEKAIPQEDAIRREQAEINDRLNNLEKELTKVDEFKPEDALPIVDQLAANTNTLKTATDSNNEKAVAPSSLISHDDLVVGLPEKVFQLQHAIDDKKQALNKAAAVNEIAPKLQLVSQQLQSVPQEVPASLDEQKQLLEDVENQKHNLENLLANLPENDPTADELRQKSQWDLSRLKDLLKQLGSAVGDKLAALAAFNAARKNAEDALLDITREDGGDDNKSPDELIDDLAKKEETVAKLLDTVSGVKPDELDDKERAEYNDLLARLATAADVLKNKRAELEQAVKAKADEKSLHDSVDRIVSRLVPLVRESDELRHNAEAVPTQYAPKAEELKKEVEAAKAVIANAPSSDAHVQQLEQAVATAETLIPDLEERARLWNEFLAARNDIDALIEQLQQPLDAVLAQPKRSAEEAAQDVENLRNNSQQLSDLDNKIANLQRISELLDPLESAYADVRFFDVDAEQTRHQYDDVLNDVAAELEDETLLKQSASQVANEIDDISKMIDSTDPERSILDTIAKSDIPALKAQINRIKDRIVNADASRKHVTTDPKIAEDLDNKLAKLQTELDDAIKTSDEHDKEQLILSLKLNISQFEQIPLDQLKSDDLKTAEKEITNSLKPEEAEPLLAKIQELREAKRVGDEARSAAHDQIVALEKEAEDVTAKESAKKKKKDKKKSPQEMIDELSAKVVEAKALIPKIEEAAKNENLPADDKPKAEQLVSNLEAFVKDVETQVSEKQDELDKLNNANDAIKRLGDALDDAEKTVVPSSVPALSEFKDRIAPHLATLVEAVNDVPASVEPSAVALRDRAAKFVSDLEKNIQKTGDDEKRADELKNDDGNAVKNVEDVVSKYQNQPQPLDVAKDDANKLKATVEQLTKLAESSDKIDPQVAKDIKDSKTKAKELLQALEKAIPQEDAIRREQAEINDRLNNLEKELTKVDEFKPEDALPIVDQLAANTNTLKTATDSNNEKAVAPSSLISHDDLVVGLPEKVFQLQHAIDDKKQALNKAAAVNEIAPKLQLVSQQLQSVPQEVPASLDEQKQLLEDVENQKHNLENLLANLPENDPTADELRQKSQWDLSRLKDLLKQLGSAVGDKLAALAAFNAARKNAEDALLDITREDGGDDNKSPDELIDDRGRSTGSAVGDKLAALAAFNAARKNAEDALLDITREDGGDDNKSPDELIDDLAKKEETVAKLLDTVSGVKPDELDDKERAEYNDLLARLATAADVLKNKRAELEQAVKAKADEKSLHDSVDRIVSRLVPLVRESDELRHNAEAVPTQYAPKAEELKKEVEAAKAVIANAPSSDAHVQQLEQAVATAETLIPDLEERARLWNEFLAARNDIDALIEQLQQPLDAVLAQPKRSAEEAAQDVENLRNNSQQLSDLDNKIANLQRISELLDPLESAYADVRFFDVDAEQTRHQYDDVLNDVAAELEDETLLKQSASQVANEIDDISKMIDSTDPERSILDTIAKSDIPALKAQINRIKDRIVNADASRKHVTTDPKIAEDLDNKLAKLQTELDDAIKTSDEHDKEQLILSLKLNISQFEQIPLDQLKSDDLKTAEKEITNSLKPEEAEPLLAKIQELREAKRVGDEARSAAHDQIVALEKEAEDVTAKESAKKKKKDKKKSPQEMIDELSAKVVEAKALIPKIEEAAKNENLPADDKPKAEQLVSNLEAFVKDVETQVSEKQDELDKLNNANDAIKRLGDALDDAEKTVVPSSVPALSEFKDRIAPHLATLVEAVNDVPASVEPSAVALRDRAAKFVSDLEKNIQKTGDDEKRADELKNDVGNAVKNVEDVVSKYQNQPQPLDVAKDDANKLKATVEQLTKLAESSDKIDPQVAKDIKDSKTKAKELLQALEKAIPQEDAIRREQAEINDRLNNLEKELTKVDEFKPEDALPIVDQLAANTNTLKTATDSNNEKAVAPSSLISHDDLVVGLPEKVFQLQHAIDDKKQALNKAAAVNEIAPKLQLVSQQLQSVPQEVPASLDEQKQLLEDVENQKHNLENLLANLPENDPTADELRQKSQWDLSRLKDLLKQLGSAVGDKLAALAAFNAARKNAEDALLDITREDGGDDNKSPDELIDDLAKKEETVAKLLDTVSGVKPDELDDKERAEYNDLLARLATAADVLKNKRAELEQAVKAKADEKSLHDSVDRIVSRLVPLVRESDELRHNAEAVPTQYAPKAEELKKEVEAAKAVIANAPSSDAHVQQLEQAVATAETLIPDLEERARLWNEFLAARNDIDALIEQLQQPLDAVLAQPKRSAEEAAQDVENLRNNSQQLSDLDNKIANLQRISELLDPLESAYADVRFFDVDAEQTRHQYDDVLNDVAAELEDETLLKQSASQVANEIDDISKMIDSTDPERSILDTIAKSDIPALKAQINRIKDRIVNADASRKHVTTDPKIAEDLDNKLAKLQTELDDAIKTSDEHDKEQLILSLKLNISQFEQIPLDQLKSDDLKTAEKEITNSLKPEEAEPLLAKIQELREAKRVGDEARSAAHDQIVALEKEAEDVTAKESAKKKKKDKKKSPQEMIDELSAKVVEAKALIPKIEEAAKNENLPADDKPKAEQLVSNLEAFVKDVETQVSEKQDELDKLNNANDAIKRLGDALDDAEKTVVPSSVPALSEFKDRIAPHLATLVEAVNDVPASVEPSAVALRDRAAKFVSDLEKNIQKTGDDEKRADELKNDVGNAVKNVEDVVSKYQNQPQPLDVAKDDANKLKATVEQLTKLAESSDKIDPQVAKDIKDSKTKAKELLQALEKAIPQEDAIRREQAEINDRLNNLEKELTKVDEFKPEDALPIVDQLAANTNTLKTATDSNNEKAVAPSSLISHDDLVVGLPEKVFQLQHAIDDKKQALNKAAAVNEIAPKLQLVSQQLQSVPQEVPASLDEQKQLLEDVENQKHNLENLLANLPENDPTADELRQKSQWDLSRLKDLLKQLGSAVGDKLAALAAFNAARKNAEDALLDITREDGGDDNKSPDELIDDLAKKEETVAKLLDTVSGVKPDELDDKERAEYNDLLARLATAADVLKNKRAELEQAVKAKADEKSLHDSVDRIVSRLVPLVRESDELRHNAEAVPTQYAPKAEELKKEVEAAKAVIANAPSSDAHVQQLEQAVATAETLIPDLEERARLWNEFLAARNDIDALIEQLQQPLDAVLAQPKRSAEEAAQDVENLRNNSQQLSDLDNKIANLQRISELLDPLESAYADVRFFDVDAEQTRHQYDDVLNDVAAELEDETLLKQSASQVANEIDDISKMIDSTDPERSILDTIAKSDIPALKAQINRIKDRIVNADASRKHVTTDPKIAEDLDNKLAKLQTELDDAIKTSDEHDKEQLILSLKLNISQFEQIPLDQLKSDDLKTAEKEITNSLKPEEAEPLLAKIQELREAKRVGDEARSAAHDQIVALEKEAEDVTAKESAKKKKKDKKKSPQEMIDELSAKVVEAKALIPKIEEAAKNENLPADDKPKAEQLVSNLEAFVKDVETQVSEKQDELDKLNNANDAIKRLGDALDDAEKTVVPSSVPALSEFKDRIAPHLATLVEAVNDVPASVEPSAVALRDRAAKFVSDLEKNIQKTGDDEKRADELKNDVGNAVKNVEDVVSKYQNQPQPLDVAKDDANKLKATVEQLTKLAESSDKIDPQVAKDIKDSKTKAKELLQALEKAIPQEDAIRREQAEINDRLNNLEKELTKVDEFKPEDALPIVDQLAANTNTLKTATDSNNEKAVAPSSLISHDDLVVGLPEKVFQLQHAIDDKKQALNKAAAVNEIAPKLQLVSQQLQSVPQEVPASLDEQKQLLEDVENQKHNLENLLANLPENDPTADELRQKSQWDLSRLKDLLKQLGSAVGDKLAALAAFNAARKNAEDALLDITREDGGDDNKSPDELIDDLAKKEETVAKLLDTVSGVKPDELDDKERAEYNDLLARLATAADVLKNKRAELEQAVKAKADEKSLHDSVDRIVSRLVPLVRESDELRHNAEAVPTQYAPKAEELKKEVEAAKAVIANAPSSDAHVQQLEQAVATAETLIPDLEERARLWNEFLAARNDIDALIEQLQQPLDAVLAQPKRSAEEAAQDVENLRNNSQQLSDLDNKIANLQRISELLDPLESAYADVRFFDVDAEQTRHQYDDVLNDVAAELEDETLLKQSASQVANEIDDISKMIDSTDPERSILDTIAKSDIPALKAQINRIKDRIVNADASRKHVTTDPKIAEDLDNKLAKLQTELDDAIKTSDEHDKEQLILSLKLNISQFEQIPLDQLKSDDLKTAEKEITNSLKPEEAEPLLAKIQELREAKRVGDEARSAAHDQIVALEKEAEDVTAKESAKKKKKDKKKSPQEMIDELSAKVVEAKALIPKIEEAAKNENLPADDKPKAEQLVSNLEAFVKDVETQVSEKQDELDKLNNANDAIKRLGDALDDAEKTVVPSSVPALSEFKDRIAPHLATLVEAVNDVPASVEPSAVALRDRAAKFVSDLEKNIQKTGDDEKRADELKNDVGNAVKNVEDVVSKYQNQPQPLDVAKDDANKLKATVEQLTKLAESSDKIDPQVAKDIKDSKTKAKELLQALEKAIPQEDAIRREQAEINDRLNKLEKELTKVDEFKPEDALPIVDQLAANTNTLKTATDSNNEKAVAPSSLISHDDLVVGLPEKVFQLQHAIDDKKQALNKAAAVNEIAPKLQLVSQQLQSVPQEVPASLDEQKQLLEDVENQKHNLENLLANLPENDPTADELRQKSQWDLSRLKDLLKQLGSAVGEKLAALAAFNAARKNAEDALLDITREDGGDDNKSPDELIDDLAKKEETVAKLLDTVSGVKPDELDDKERAEYNDLLARLATAADVLKNKRAELEQAVKAKADEKSLHDSVDRIVSRLVPLVRESDELRHNAEAVPTQYAPKAEELKKEVEAAKAVIANAPSSDAHVQQLEQAVATAETLIPDLEERASIWERFVKAKDDLYDYLEKLENNVSDVLNRPRLPVSQAQQRFNKLKEQSYLLDRIRDLKIDFDDLGEALLPLTVAEDELRFMHVHVESIERQYEDTMDKLNAEITAEVELLRTLDILSNELSQCKEDINNPSVDVDELSRATMLNDAIAHLENQKVVVARSEKDRKFVESSTSIDLDQLLAEAKRLLKEIEPRLQLAQPDHDNEDDEDEEKGSDEKPYDVRAAAEVLSALYPDEHPHNVLRNIGFEELPSDSESRSEFDSLDSRSDGLLSPIPDDSTLSEEQLRRQRSRWRRVLRTALPLQALLVLLMGAACLVPHCDDEYCCQLLNNFAKSFDPSLEFVNGPPPF.

Residues 1–325 (MSSSPPARPC…VITYVSQFVR (325 aa)) are actin-binding. Residues 1–8494 (MSSSPPARPC…QRSRWRRVLR (8494 aa)) are Cytoplasmic-facing. Positions 23 to 130 (KAQKNTFTRW…LIWQIILHFQ (108 aa)) constitute a Calponin-homology (CH) 1 domain. The tract at residues 148-197 (TEEPTSSAQPEVVVTAPSPTPSSKKSHSKVSSLSGSKTSLASGEKAPSSP) is disordered. Residues 159–190 (VVVTAPSPTPSSKKSHSKVSSLSGSKTSLASG) show a composition bias toward low complexity. The Calponin-homology (CH) 2 domain occupies 222-328 (QSVEQVFLRW…YVSQFVRMFG (107 aa)). Coiled-coil stretches lie at residues 754-774 (NIRDKLIELERLNEIYDNHSR), 1072-1101 (SFFQLEFDRLNEKLNMLIHDKDKLRELMVH), 1215-1236 (ADILRMKDEKKRDEKTIDEIQA), 1324-1384 (DTKK…QFED), 1574-1629 (RSIE…DLVK), 1725-1754 (ENRNDLEEVKRLAAEIDRAIDTASSMYEDA), 1950-1981 (PAIIESLDKIKDQINNARDNINRQIDNLNYNQ), 2103-2580 (DNIE…KKSD), 2682-2712 (SVKETLDKLKQAKEEDDKLAGVYDELEKIAK), 2852-2949 (IMQE…NIGK), 3002-3119 (DQIV…KTVV), 3178-3295 (DDEK…DEFK), 3346-3417 (QLQH…PEND), 3482-3552 (DELI…EKSL), 3587-3703 (KAEE…ELLD), 3781-3839 (ALKA…KEQL), 3902-4022 (AAHD…KTVV), 4114-4198 (LDVA…DEFK), and 4249-4320 (QLQH…PEND). A compositionally biased stretch (basic and acidic residues) spans 3010–3019 (EAEDVTAKES). A disordered region spans residues 3010–3033 (EAEDVTAKESAKKKKKDKKKSPQE). Repeat copies occupy residues 3241 to 4143 (QVAK…KIDP), 4144 to 5097 (QVAK…KIDP), 5098 to 6000 (QVAK…KIDP), 6001 to 6903 (QVAK…KIDP), 6904 to 7806 (QVAK…KIDP), and 7807 to 8199 (QVAK…EERA). Residues 3241 to 8199 (QVAKDIKDSK…TLIPDLEERA (4959 aa)) form a 6 X tandem repeat region. Basic and acidic residues predominate over residues 3913–3922 (EAEDVTAKES). Positions 3913–3936 (EAEDVTAKESAKKKKKDKKKSPQE) are disordered. Residues 4372–4393 (ITREDGGDDNKSPDELIDDRGR) show a composition bias toward basic and acidic residues. Residues 4372–4395 (ITREDGGDDNKSPDELIDDRGRST) form a disordered region. Coiled coils occupy residues 4436–4506 (DELI…EKSL), 4541–4657 (KAEE…ELLD), 4735–4793 (ALKA…KEQL), 4856–4976 (AAHD…KTVV), 5035–5152 (DDEK…DEFK), 5203–5274 (QLQH…PEND), 5339–5409 (DELI…EKSL), 5444–5560 (KAEE…ELLD), 5638–5696 (ALKA…KEQL), 5759–5879 (AAHD…KTVV), 5938–6055 (DDEK…DEFK), 6106–6177 (QLQH…PEND), 6242–6312 (DELI…EKSL), 6347–6463 (KAEE…ELLD), 6541–6599 (ALKA…KEQL), 6662–6782 (AAHD…KTVV), 6841–6958 (DDEK…DEFK), 7009–7080 (QLQH…PEND), 7145–7215 (DELI…EKSL), 7250–7366 (KAEE…ELLD), 7444–7502 (ALKA…KEQL), 7565–7685 (AAHD…KTVV), 7744–7861 (DDEK…DEFK), 7912–7983 (QLQH…PEND), 8048–8118 (DELI…EKSL), 8153–8204 (KAEE…IWER), 8273–8329 (VAED…DINN), and 8370–8390 (STSIDLDQLLAEAKRLLKEIE). The span at 4867–4876 (EAEDVTAKES) shows a compositional bias: basic and acidic residues. Residues 4867 to 4890 (EAEDVTAKESAKKKKKDKKKSPQE) are disordered. Basic and acidic residues predominate over residues 5770-5779 (EAEDVTAKES). Residues 5770-5793 (EAEDVTAKESAKKKKKDKKKSPQE) are disordered. Residues 6673 to 6682 (EAEDVTAKES) show a composition bias toward basic and acidic residues. Residues 6673 to 6696 (EAEDVTAKESAKKKKKDKKKSPQE) are disordered. Over residues 7576–7585 (EAEDVTAKES) the composition is skewed to basic and acidic residues. The interval 7576–7599 (EAEDVTAKESAKKKKKDKKKSPQE) is disordered. 2 disordered regions span residues 8391-8418 (PRLQLAQPDHDNEDDEDEEKGSDEKPYD) and 8449-8480 (SDSESRSEFDSLDSRSDGLLSPIPDDSTLSEE). Positions 8401–8411 (DNEDDEDEEKG) are enriched in acidic residues. Basic and acidic residues predominate over residues 8451 to 8464 (SESRSEFDSLDSRS). A KASH domain is found at 8486 to 8545 (RSRWRRVLRTALPLQALLVLLMGAACLVPHCDDEYCCQLLNNFAKSFDPSLEFVNGPPPF). A helical; Anchor for type IV membrane protein membrane pass occupies residues 8495-8513 (TALPLQALLVLLMGAACLV). Topologically, residues 8514 to 8545 (PHCDDEYCCQLLNNFAKSFDPSLEFVNGPPPF) are perinuclear space.

Belongs to the nesprin family. In terms of assembly, interacts with F-actin via its N-terminal domain. Most likely interacts with unc-84; the interaction is probably required to recruit anc-1 to the nuclear envelope. In terms of tissue distribution, ubiquitously expressed in all postembryonic cells.

The protein localises to the nucleus outer membrane. The protein resides in the cytoplasm. Its subcellular location is the cytoskeleton. Functionally, plays a central role in nuclear and mitochondrial anchoring. Probably connects nuclei to the cytoskeleton by interacting with unc-84 at the nuclear envelope and with F-actin in the cytoplasm, creating a bridge across the nuclear envelope between the cytoskeleton and the nucleus. Has a role in positioning of the cell body of the PVQ lumbar interneuron. The polypeptide is Nuclear anchorage protein 1 (Caenorhabditis elegans).